A 148-amino-acid polypeptide reads, in one-letter code: Ribonuclease pancreatic (148 aa).

The N-terminal stretch at 1 to 25 is a signal peptide; it reads MGLEKSLILFPLLVLVVGWVQPSLG. Residues lysine 32, arginine 35, 65–69, lysine 90, and arginine 109 each bind substrate; that span reads KPVNT. 4 cysteine pairs are disulfide-bonded: cysteine 50–cysteine 108, cysteine 64–cysteine 119, cysteine 82–cysteine 134, and cysteine 89–cysteine 96. Histidine 143 acts as the Proton donor in catalysis.

It belongs to the pancreatic ribonuclease family. In terms of assembly, monomer. Interacts with and forms tight 1:1 complexes with RNH1. Dimerization of two such complexes may occur. Interaction with RNH1 inhibits this protein. In terms of tissue distribution, pancreas.

It is found in the secreted. It carries out the reaction an [RNA] containing cytidine + H2O = an [RNA]-3'-cytidine-3'-phosphate + a 5'-hydroxy-ribonucleotide-3'-[RNA].. The catalysed reaction is an [RNA] containing uridine + H2O = an [RNA]-3'-uridine-3'-phosphate + a 5'-hydroxy-ribonucleotide-3'-[RNA].. Functionally, endonuclease that catalyzes the cleavage of RNA on the 3' side of pyrimidine nucleotides. Acts on single-stranded and double-stranded RNA. In Peromyscus leucopus (White-footed mouse), this protein is Ribonuclease pancreatic (RNASE1).